A 259-amino-acid chain; its full sequence is Bidirectional sugar transporter SWEET6a (259 aa).

The Extracellular segment spans residues 1–9 (MISPDAARN). A helical membrane pass occupies residues 10 to 30 (VVGIIGNVISFGLFLAPVPTF). Positions 10 to 98 (VVGIIGNVIS…IFFLYSPNKK (89 aa)) constitute a MtN3/slv 1 domain. Topologically, residues 31–45 (WRICKRKDVEEFKAD) are cytoplasmic. A helical transmembrane segment spans residues 46 to 66 (PYLATLLNCMLWVFYGIPVVH). Residues 67-69 (PNS) lie on the Extracellular side of the membrane. A helical transmembrane segment spans residues 70 to 90 (ILVVTINGIGLLVEGTYLLIF). Residues 91–103 (FLYSPNKKRLRMC) lie on the Cytoplasmic side of the membrane. Residues 104–124 (AVLGVELVFMLAVILGVLLGA) traverse the membrane as a helical segment. The Extracellular portion of the chain corresponds to 125–131 (HTHEKRS). The chain crosses the membrane as a helical span at residues 132 to 152 (MIVGILCVFFGSIMYFSPLTI). Positions 133 to 216 (IVGILCVFFG…LILYACYYRT (84 aa)) constitute a MtN3/slv 2 domain. Topologically, residues 153–165 (MGKVIKTKSVEYM) are cytoplasmic. Residues 166-186 (PFFLSLVCFLNGVCWTAYALI) traverse the membrane as a helical segment. Over 187–189 (RFD) the chain is Extracellular. The helical transmembrane segment at 190-210 (IYVTIPNGLGALFGAIQLILY) threads the bilayer. The Cytoplasmic segment spans residues 211-259 (ACYYRTTPKKTKAAKDVEMPSVVVSGTGAAAAAGGGNTGGGSISVTVER).

The protein belongs to the SWEET sugar transporter family. Forms homooligomers and/or heterooligomers.

Its subcellular location is the cell membrane. In terms of biological role, mediates both low-affinity uptake and efflux of sugar across the plasma membrane. This chain is Bidirectional sugar transporter SWEET6a (SWEET6A), found in Oryza sativa subsp. indica (Rice).